A 62-amino-acid chain; its full sequence is Photosystem II reaction center protein Z (62 aa).

2 helical membrane passes run 8-28 (AVFA…VVFA) and 41-61 (FSGT…NSLI).

It belongs to the PsbZ family. As to quaternary structure, PSII is composed of 1 copy each of membrane proteins PsbA, PsbB, PsbC, PsbD, PsbE, PsbF, PsbH, PsbI, PsbJ, PsbK, PsbL, PsbM, PsbT, PsbY, PsbZ, Psb30/Ycf12, at least 3 peripheral proteins of the oxygen-evolving complex and a large number of cofactors. It forms dimeric complexes.

The protein resides in the plastid. It is found in the chloroplast thylakoid membrane. Its function is as follows. May control the interaction of photosystem II (PSII) cores with the light-harvesting antenna, regulates electron flow through the 2 photosystem reaction centers. PSII is a light-driven water plastoquinone oxidoreductase, using light energy to abstract electrons from H(2)O, generating a proton gradient subsequently used for ATP formation. The sequence is that of Photosystem II reaction center protein Z from Citrus sinensis (Sweet orange).